The sequence spans 241 residues: MRLVIARCCVDYVGRLEAHLPPADRLILLKADGSVSIHADDRAYKPLNWMMPPCSLEAVEASSFDGDDAPTEYSELGNEGVEQLWIVTNPKGEQLRIQIFEIYSDTEHDLGEDPGLVKDGVEAHLQELLAEQIEILGEGYSLIRREYPTAIGPVDILSKDSTGATVAVEIKRRGGIDGVEQLTRYVELLNRDELLAPVTGVFAAQEIKPQARTLAEDRGFRCVTLDYEAMRGTDSSELRLF.

The protein belongs to the NucS endonuclease family.

Its subcellular location is the cytoplasm. Functionally, cleaves both 3' and 5' ssDNA extremities of branched DNA structures. The polypeptide is Endonuclease NucS (Corynebacterium jeikeium (strain K411)).